Consider the following 355-residue polypeptide: 3-isopropylmalate dehydrogenase (355 aa).

Arg-98, Arg-108, Arg-132, and Asp-223 together coordinate substrate. Positions 223, 247, and 251 each coordinate Mg(2+). Residue Gly-283–Asp-295 participates in NAD(+) binding.

The protein belongs to the isocitrate and isopropylmalate dehydrogenases family. LeuB type 2 subfamily. As to quaternary structure, homodimer. Mg(2+) serves as cofactor. The cofactor is Mn(2+).

The protein localises to the cytoplasm. It carries out the reaction (2R,3S)-3-isopropylmalate + NAD(+) = 4-methyl-2-oxopentanoate + CO2 + NADH. It participates in amino-acid biosynthesis; L-leucine biosynthesis; L-leucine from 3-methyl-2-oxobutanoate: step 3/4. Catalyzes the oxidation of 3-carboxy-2-hydroxy-4-methylpentanoate (3-isopropylmalate) to 3-carboxy-4-methyl-2-oxopentanoate. The product decarboxylates to 4-methyl-2 oxopentanoate. The protein is 3-isopropylmalate dehydrogenase of Clavibacter michiganensis subsp. michiganensis (strain NCPPB 382).